A 327-amino-acid chain; its full sequence is Cyclic AMP-responsive element-binding protein 1 (327 aa).

Disordered regions lie at residues 1–26 (MTME…QQMT) and 94–113 (SEDS…RREI). One can recognise a KID domain in the interval 87–146 (QISTIAESEDSQESVDSVTDSQKRREILSRRPSYRKILNDLSSDAPGVPRIEEEKSEEET). Ser119 is modified (phosphoserine; by CaMK1, CaMK2, CaMK4, PKB/AKT1 or PKB/AKT2, RPS6KA3, RPS6KA4, RPS6KA5, SGK1 and TSSK4). Lys122 participates in a covalent cross-link: Glycyl lysine isopeptide (Lys-Gly) (interchain with G-Cter in SUMO2). The segment at 125–148 (NDLSSDAPGVPRIEEEKSEEETSA) is disordered. Residue Ser128 is modified to Phosphoserine. Ser257 bears the Phosphoserine; by HIPK2 mark. The region spanning 269 to 327 (ARKREVRLMKNREAARECRRKKKEYVKCLENRVAVLENQNKTLIEELKALKDLYCHKSD) is the bZIP domain. The interval 270-295 (RKREVRLMKNREAARECRRKKKEYVK) is basic motif. Glycyl lysine isopeptide (Lys-Gly) (interchain with G-Cter in SUMO1) cross-links involve residues Lys271 and Lys290. The segment at 297–318 (LENRVAVLENQNKTLIEELKAL) is leucine-zipper.

This sequence belongs to the bZIP family. As to quaternary structure, interacts with PPRC1. Binds DNA as a dimer. This dimer is stabilized by magnesium ions. Interacts, through the bZIP domain, with the coactivators CRTC1/TORC1, CRTC2/TORC2 and CRTC3/TORC3. When phosphorylated on Ser-119, binds CREBBP. Interacts with CREBL2; regulates CREB1 phosphorylation, stability and transcriptional activity. Interacts (phosphorylated form) with TOX3. Interacts with ARRB1. Binds to HIPK2. Interacts with SGK1. Interacts with TSSK4; this interaction facilitates phosphorylation on Ser-119. Forms a complex with KMT2A and CREBBP. Interacts with TOX4; CREB1 is required for full induction of TOX4-dependent activity and the interaction is increased by cAMP and inhibited by insulin. (Microbial infection) Interacts with hepatitis B virus/HBV protein X. In terms of assembly, (Microbial infection) Interacts with HTLV-1 protein Tax. Stimulated by phosphorylation. Phosphorylation of both Ser-119 and Ser-128 in the SCN regulates the activity of CREB and participates in circadian rhythm generation. Phosphorylation of Ser-119 allows CREBBP binding. In liver, phosphorylation is induced by fasting or glucagon in a circadian fashion. CREBL2 positively regulates phosphorylation at Ser-119 thereby stimulating CREB1 transcriptional activity. Phosphorylated upon calcium influx by CaMK4 and CaMK2 on Ser-119. CaMK4 is much more potent than CaMK2 in activating CREB. Phosphorylated by CaMK2 on Ser-128. Phosphorylation of Ser-128 blocks CREB-mediated transcription even when Ser-119 is phosphorylated. Phosphorylated by CaMK1. Phosphorylation of Ser-257 by HIPK2 in response to genotoxic stress promotes CREB1 activity, facilitating the recruitment of the coactivator CBP. Phosphorylated at Ser-119 by RPS6KA3, RPS6KA4 and RPS6KA5 in response to mitogenic or stress stimuli. Phosphorylated by TSSK4 on Ser-119. Post-translationally, sumoylated with SUMO1. Sumoylation on Lys-290, but not on Lys-271, is required for nuclear localization of this protein. Sumoylation is enhanced under hypoxia, promoting nuclear localization and stabilization.

The protein resides in the nucleus. In terms of biological role, phosphorylation-dependent transcription factor that stimulates transcription upon binding to the DNA cAMP response element (CRE), a sequence present in many viral and cellular promoters. Transcription activation is enhanced by the TORC coactivators which act independently of Ser-119 phosphorylation. Involved in different cellular processes including the synchronization of circadian rhythmicity and the differentiation of adipose cells. Regulates the expression of apoptotic and inflammatory response factors in cardiomyocytes in response to ERFE-mediated activation of AKT signaling. In Homo sapiens (Human), this protein is Cyclic AMP-responsive element-binding protein 1 (CREB1).